A 418-amino-acid polypeptide reads, in one-letter code: Glutamyl-tRNA reductase (418 aa).

Substrate is bound by residues 49–52 (TCNR), Ser109, 114–116 (EPQ), and Gln120. The Nucleophile role is filled by Cys50. 189 to 194 (GAGETI) contributes to the NADP(+) binding site.

The protein belongs to the glutamyl-tRNA reductase family. As to quaternary structure, homodimer.

It catalyses the reaction (S)-4-amino-5-oxopentanoate + tRNA(Glu) + NADP(+) = L-glutamyl-tRNA(Glu) + NADPH + H(+). The protein operates within porphyrin-containing compound metabolism; protoporphyrin-IX biosynthesis; 5-aminolevulinate from L-glutamyl-tRNA(Glu): step 1/2. In terms of biological role, catalyzes the NADPH-dependent reduction of glutamyl-tRNA(Glu) to glutamate 1-semialdehyde (GSA). This is Glutamyl-tRNA reductase from Erwinia tasmaniensis (strain DSM 17950 / CFBP 7177 / CIP 109463 / NCPPB 4357 / Et1/99).